Here is a 40-residue protein sequence, read N- to C-terminus: Chaperonin HSP60, mitochondrial (40 aa).

Belongs to the chaperonin (HSP60) family.

The protein resides in the mitochondrion. Functionally, implicated in mitochondrial protein import and macromolecular assembly. May facilitate the correct folding of imported proteins. May also prevent misfolding and promote the refolding and proper assembly of unfolded polypeptides generated under stress conditions in the mitochondrial matrix. In Solanum tuberosum (Potato), this protein is Chaperonin HSP60, mitochondrial.